A 153-amino-acid polypeptide reads, in one-letter code: ORM1-like protein 1 (153 aa).

Residues 1-27 are Cytoplasmic-facing; that stretch reads MNVGVAHSEVNPNTRVMNSRGIWLTYA. 2 helical membrane passes run 28–46 and 47–64; these read LGVG…FSVP and VVWT…YVFM. Over 65-105 the chain is Cytoplasmic; it reads HAVKGTPFETPDQGKARLLTHWEQLDYGVQFTSSRKFFTIS. 2 helical membrane-spanning segments follow: residues 106 to 123 and 124 to 140; these read PIIL…DTAH and FVIN…PKLP. Residues 141 to 153 lie on the Cytoplasmic side of the membrane; sequence QLHGVRIFGINKY.

This sequence belongs to the ORM family. As to quaternary structure, ceramide-sensitive subunit of the serine palmitoyltransferase (SPT) complex, which is also composed of SPTLC1, SPTLC2/3 and SPTSSA/B.

The protein localises to the endoplasmic reticulum membrane. Its function is as follows. Plays an essential role in the homeostatic regulation of sphingolipid de novo biosynthesis by modulating the activity of the serine palmitoyltransferase (SPT) in response to ceramide levels. When complexed to SPT, the binding of ceramides to its N-terminus stabilizes a conformation that block SPT substrate entry, hence preventing SPT catalytic activity. Through this mechanism, maintains ceramide levels at sufficient concentrations for the production of complex sphingolipids, but which prevents the accumulation of ceramides to levels that trigger apoptosis. In Danio rerio (Zebrafish), this protein is ORM1-like protein 1 (ormdl1).